A 165-amino-acid polypeptide reads, in one-letter code: 3-isopropylmalate dehydratase small subunit (165 aa).

This sequence belongs to the LeuD family. LeuD type 2 subfamily. Heterodimer of LeuC and LeuD.

The catalysed reaction is (2R,3S)-3-isopropylmalate = (2S)-2-isopropylmalate. Its pathway is amino-acid biosynthesis; L-leucine biosynthesis; L-leucine from 3-methyl-2-oxobutanoate: step 2/4. Catalyzes the isomerization between 2-isopropylmalate and 3-isopropylmalate, via the formation of 2-isopropylmaleate. In Lachnoclostridium phytofermentans (strain ATCC 700394 / DSM 18823 / ISDg) (Clostridium phytofermentans), this protein is 3-isopropylmalate dehydratase small subunit.